Reading from the N-terminus, the 61-residue chain is Large ribosomal subunit protein uL30 (61 aa).

It belongs to the universal ribosomal protein uL30 family. Part of the 50S ribosomal subunit.

The polypeptide is Large ribosomal subunit protein uL30 (Latilactobacillus sakei subsp. sakei (strain 23K) (Lactobacillus sakei subsp. sakei)).